A 228-amino-acid polypeptide reads, in one-letter code: PKHD-type hydroxylase xcc-b100_1388 (228 aa).

Residues 78 to 180 (RIYPPLFNRY…RVASFFWIQS (103 aa)) enclose the Fe2OG dioxygenase domain. 3 residues coordinate Fe cation: H96, D98, and H161. Position 171 (R171) interacts with 2-oxoglutarate.

Fe(2+) serves as cofactor. Requires L-ascorbate as cofactor.

The polypeptide is PKHD-type hydroxylase xcc-b100_1388 (Xanthomonas campestris pv. campestris (strain B100)).